A 56-amino-acid chain; its full sequence is Large ribosomal subunit protein bL33 (56 aa).

It belongs to the bacterial ribosomal protein bL33 family.

The chain is Large ribosomal subunit protein bL33 from Anaplasma marginale (strain Florida).